The following is a 104-amino-acid chain: Synaptic plasticity regulator PANTS (104 aa).

The segment at 58–104 is disordered; sequence RRSAEAQADSLPPGPEGEPRVAGAGPNAVTGILTRNQGTERPHGDTR. A compositionally biased stretch (basic and acidic residues) spans 95 to 104; it reads GTERPHGDTR.

Belongs to the UPF0545 family. Interacts with RTN4 isoform A/Nogo-A; the interaction results in enhanced RTN4-mediated inhibition of AMPA receptor clustering. Also interacts with NCAM1, RANBP2 and CCT8. In terms of processing, rapidly degraded by proteolysis following neuronal stimulation, resulting in increased AMPA receptor clustering.

It is found in the synapse. Its subcellular location is the synaptic cleft. Negatively regulates long-term potentiation and modulates adult synaptic plasticity. Stabilizes the interaction of RTN4 isoform A/Nogo-A with its receptors, inhibiting clustering of postsynaptic AMPA receptors at synaptic sites. Upon neuronal stimulation, degraded at synapses, reducing RTN4 signaling and allowing AMPA receptor clustering at individual synapses. The chain is Synaptic plasticity regulator PANTS from Bos taurus (Bovine).